We begin with the raw amino-acid sequence, 221 residues long: Adenylate kinase (221 aa).

10–15 (GAGKGT) is an ATP binding site. The NMP stretch occupies residues 30–59 (STGDMLRAAVKAGTPLGLEAKRYMDAGELV). Residues Thr31, Arg36, 57–59 (ELV), 85–88 (GFPR), and Gln92 contribute to the AMP site. Positions 122–159 (GRRMHPASGRTYHVKFNPPKVEGVDDVTGEPLIQRDDD) are LID. ATP is bound by residues Arg123 and 132–133 (TY). Positions 156 and 167 each coordinate AMP. Gly207 is an ATP binding site.

Belongs to the adenylate kinase family. As to quaternary structure, monomer.

The protein resides in the cytoplasm. The enzyme catalyses AMP + ATP = 2 ADP. It participates in purine metabolism; AMP biosynthesis via salvage pathway; AMP from ADP: step 1/1. Its function is as follows. Catalyzes the reversible transfer of the terminal phosphate group between ATP and AMP. Plays an important role in cellular energy homeostasis and in adenine nucleotide metabolism. This Paraburkholderia phymatum (strain DSM 17167 / CIP 108236 / LMG 21445 / STM815) (Burkholderia phymatum) protein is Adenylate kinase.